We begin with the raw amino-acid sequence, 114 residues long: T cell receptor beta variable 10-3 (114 aa).

A signal peptide spans 1 to 21; it reads MGTRLFFYVALCLLWTGHMDA. One can recognise an Ig-like domain in the interval 22-114; the sequence is GITQSPRHKV…TSVYFCAISE (93 aa). Cysteines 42 and 110 form a disulfide.

Alpha-beta TR is a heterodimer composed of an alpha and beta chain; disulfide-linked. The alpha-beta TR is associated with the transmembrane signaling CD3 coreceptor proteins to form the TR-CD3 (TcR or TCR). The assembly of alpha-beta TR heterodimers with CD3 occurs in the endoplasmic reticulum where a single alpha-beta TR heterodimer associates with one CD3D-CD3E heterodimer, one CD3G-CD3E heterodimer and one CD247 homodimer forming a stable octameric structure. CD3D-CD3E and CD3G-CD3E heterodimers preferentially associate with TR alpha and TR beta chains, respectively. The association of the CD247 homodimer is the last step of TcR assembly in the endoplasmic reticulum and is required for transport to the cell surface.

It localises to the cell membrane. Its function is as follows. V region of the variable domain of T cell receptor (TR) beta chain that participates in the antigen recognition. Alpha-beta T cell receptors are antigen specific receptors which are essential to the immune response and are present on the cell surface of T lymphocytes. Recognize peptide-major histocompatibility (MH) (pMH) complexes that are displayed by antigen presenting cells (APC), a prerequisite for efficient T cell adaptive immunity against pathogens. Binding of alpha-beta TR to pMH complex initiates TR-CD3 clustering on the cell surface and intracellular activation of LCK that phosphorylates the ITAM motifs of CD3G, CD3D, CD3E and CD247 enabling the recruitment of ZAP70. In turn ZAP70 phosphorylates LAT, which recruits numerous signaling molecules to form the LAT signalosome. The LAT signalosome propagates signal branching to three major signaling pathways, the calcium, the mitogen-activated protein kinase (MAPK) kinase and the nuclear factor NF-kappa-B (NF-kB) pathways, leading to the mobilization of transcription factors that are critical for gene expression and essential for T cell growth and differentiation. The T cell repertoire is generated in the thymus, by V-(D)-J rearrangement. This repertoire is then shaped by intrathymic selection events to generate a peripheral T cell pool of self-MH restricted, non-autoaggressive T cells. Post-thymic interaction of alpha-beta TR with the pMH complexes shapes TR structural and functional avidity. This is T cell receptor beta variable 10-3 from Homo sapiens (Human).